We begin with the raw amino-acid sequence, 160 residues long: Troponin C, skeletal muscle (160 aa).

EF-hand domains are found at residues 15 to 50, 51 to 86, 91 to 126, and 127 to 160; these read EMIAEFKAAFDMFDTDGGGDISTKELGTVMRMLGQN, PTREELDAIIEEVDEDGSGTIDFEEFLVMMVRQLKE, KSEEELAEFFRVFDKNGDGFIDREEFGEILRSSGEP, and VSEEEIDELMADGDKNNDGKIDFDEWLKMMENIQ. Ca(2+) is bound by residues Asp-28, Asp-30, Asp-34, Glu-39, Asp-64, Asp-66, Ser-68, Thr-70, Glu-75, Asp-104, Asn-106, Asp-108, Glu-115, Asp-140, Asn-142, Asp-144, Lys-146, and Glu-151.

It belongs to the troponin C family.

Troponin is the central regulatory protein of striated muscle contraction. Tn consists of three components: Tn-I which is the inhibitor of actomyosin ATPase, Tn-T which contains the binding EF-hand for tropomyosin and Tn-C. The binding of calcium to Tn-C abolishes the inhibitory action of Tn on actin filaments. The sequence is that of Troponin C, skeletal muscle from Anguilla anguilla (European freshwater eel).